The sequence spans 305 residues: tRNA dimethylallyltransferase (305 aa).

8–15 lines the ATP pocket; the sequence is GPTAVGKT. Substrate is bound at residue 10 to 15; it reads TAVGKT. The interaction with substrate tRNA stretch occupies residues 33-36; sequence DSRQ.

This sequence belongs to the IPP transferase family. As to quaternary structure, monomer. Requires Mg(2+) as cofactor.

The catalysed reaction is adenosine(37) in tRNA + dimethylallyl diphosphate = N(6)-dimethylallyladenosine(37) in tRNA + diphosphate. Its function is as follows. Catalyzes the transfer of a dimethylallyl group onto the adenine at position 37 in tRNAs that read codons beginning with uridine, leading to the formation of N6-(dimethylallyl)adenosine (i(6)A). In Thermotoga neapolitana (strain ATCC 49049 / DSM 4359 / NBRC 107923 / NS-E), this protein is tRNA dimethylallyltransferase.